We begin with the raw amino-acid sequence, 65 residues long: Large ribosomal subunit protein bL32 (65 aa).

Belongs to the bacterial ribosomal protein bL32 family.

This chain is Large ribosomal subunit protein bL32 (rpmF), found in Rickettsia prowazekii (strain Madrid E).